Reading from the N-terminus, the 314-residue chain is MQVTFLGTSSGVPTLNRNVSAMVLKPPQRSELWLFDCGEGTQHQFIRSNLKLSQIKKIFITHMHGDHIYGLPGLLASIGLAGSSSGIELYGPAPLKNFIDSCLYNSSSRLAYSLKFHRVENAANNKEILFEDSELEVKTAPLKHRIPSFAYRVNQKTRPGRFDIEKAKSKGIPPGPVYADLQRGEEVRLEDGRIFSGKEFCGPPRPGVSMVYCTDTVYTESAIEISRKADLLIHESTYSYKETEMAYERGHSTATMAAQIAAKANVDQLILTHLSPRYTPGNQTCPNDLLNEAKAIFPNTQLAKDFLQIDINKS.

Residues histidine 62, histidine 64, aspartate 66, histidine 67, histidine 144, aspartate 215, and histidine 273 each contribute to the Zn(2+) site. Catalysis depends on aspartate 66, which acts as the Proton acceptor.

This sequence belongs to the RNase Z family. As to quaternary structure, homodimer. Requires Zn(2+) as cofactor.

The enzyme catalyses Endonucleolytic cleavage of RNA, removing extra 3' nucleotides from tRNA precursor, generating 3' termini of tRNAs. A 3'-hydroxy group is left at the tRNA terminus and a 5'-phosphoryl group is left at the trailer molecule.. Functionally, zinc phosphodiesterase, which displays some tRNA 3'-processing endonuclease activity. Probably involved in tRNA maturation, by removing a 3'-trailer from precursor tRNA. The polypeptide is Ribonuclease Z (Prochlorococcus marinus (strain NATL2A)).